We begin with the raw amino-acid sequence, 1398 residues long: Disease resistance protein RPV1 (1398 aa).

The region spanning 22 to 185 is the TIR domain; that stretch reads TTYDVFLSFR…EITNSIFRQL (164 aa). NAD(+) is bound by residues 31-36 and Gly-63; that span reads RGEDTR. Glu-97 is an active-site residue. The NB-ARC domain occupies 201–440; that stretch reads SHVKEMILRL…KRSYDGLDRI (240 aa). LRR repeat units follow at residues 203–225, 423–447, 478–504, 535–560, 610–632, 633–657, 678–702, 703–726, 728–750, 751–773, 775–797, 798–820, 822–844, 845–867, 869–891, 892–914, 916–938, 939–961, 963–985, 986–1008, 1010–1032, 1033–1055, 1079–1102, and 1105–1128; these read VKEM…IYGV, KADI…IFLD, LNDL…GWEI, IKSV…VFAK, SYEL…NFDG, GKLV…DLER, MPNL…VGNM, KKLT…IGDL, SLES…GGNM, KSLT…IGDL, SLEI…GGNM, KSLK…IGDL, SLKY…GGNM, KRLL…IGDL, KSLL…IGDL, MKSL…IGDL, and LEML…AIDA. Positions 1315–1328 are enriched in polar residues; sequence QNSGDNGSALQDAN. Residues 1315–1336 are disordered; sequence QNSGDNGSALQDANGNVHGANQ. An LRR 25 repeat occupies 1346–1369; that stretch reads LDLLRNLSLGDNGSVVLEDTLGNR. The Nuclear localization signal motif lies at 1369-1373; sequence RKRRR.

The protein belongs to the disease resistance TIR-NB-LRR family. Homodimer; homodimerization is required for NAD(+) hydrolase (NADase) activity.

It localises to the nucleus. The protein localises to the cytoplasm. It carries out the reaction NAD(+) + H2O = ADP-D-ribose + nicotinamide + H(+). In terms of biological role, disease resistance (R) protein that confers resistance to multiple powdery and downy mildew by promoting cell death. Acts as a NAD(+) hydrolase (NADase): in response to activation, catalyzes cleavage of NAD(+) into ADP-D-ribose (ADPR) and nicotinamide; NAD(+) cleavage triggering a defense system that promotes cell death. The protein is Disease resistance protein RPV1 of Vitis rotundifolia (Muscadine grape).